Reading from the N-terminus, the 289-residue chain is Zinc finger matrin-type protein 3 (289 aa).

Residues 1–42 (MILLQHAVLPPPKQPSPSPPMSVATRSTGTLQLPPQKPFGQE) are disordered. A compositionally biased stretch (pro residues) spans 9–20 (LPPPKQPSPSPP). The span at 24-33 (ATRSTGTLQL) shows a compositional bias: polar residues. 2 Matrin-type zinc fingers span residues 70–100 (LYCKLCNVTLNSAQQAQAHYQGKNHGKKLRN) and 147–177 (DYCKLCDASFSSPAVAQAHYQGKNHAKRLRL). A compositionally biased stretch (polar residues) spans 180-191 (AQSNSFSESSEL). The interval 180–201 (AQSNSFSESSELGQRRARKEGN) is disordered. Residues 246 to 276 (FYCSMCNVGAGEEMEFRQHLESKQHKSKVSE) form a Matrin-type 3 zinc finger.

Interacts with dsRNA. As to expression, highly expressed in adult brain, and moderately in adult kidney and testis. Not detected in fetal brain, heart, pancreas, adrenal gland, liver or small intestine.

The protein localises to the nucleus. It localises to the nucleolus. Functionally, acts as a bona fide target gene of p53/TP53. May play a role in the TP53-dependent growth regulatory pathway. May contribute to TP53-mediated apoptosis by regulation of TP53 expression and translocation to the nucleus and nucleolus. In Homo sapiens (Human), this protein is Zinc finger matrin-type protein 3.